The sequence spans 354 residues: S-adenosylmethionine:tRNA ribosyltransferase-isomerase (354 aa).

The protein belongs to the QueA family. As to quaternary structure, monomer.

Its subcellular location is the cytoplasm. It carries out the reaction 7-aminomethyl-7-carbaguanosine(34) in tRNA + S-adenosyl-L-methionine = epoxyqueuosine(34) in tRNA + adenine + L-methionine + 2 H(+). It functions in the pathway tRNA modification; tRNA-queuosine biosynthesis. Its function is as follows. Transfers and isomerizes the ribose moiety from AdoMet to the 7-aminomethyl group of 7-deazaguanine (preQ1-tRNA) to give epoxyqueuosine (oQ-tRNA). This Pseudomonas fluorescens (strain ATCC BAA-477 / NRRL B-23932 / Pf-5) protein is S-adenosylmethionine:tRNA ribosyltransferase-isomerase.